Reading from the N-terminus, the 179-residue chain is Nucleoside diphosphate kinase 6 (179 aa).

Lysine 18, phenylalanine 67, arginine 95, threonine 101, arginine 115, and asparagine 125 together coordinate ATP. The active-site Pros-phosphohistidine intermediate is histidine 128.

Belongs to the NDK family. Requires Mg(2+) as cofactor.

The catalysed reaction is a 2'-deoxyribonucleoside 5'-diphosphate + ATP = a 2'-deoxyribonucleoside 5'-triphosphate + ADP. It catalyses the reaction a ribonucleoside 5'-diphosphate + ATP = a ribonucleoside 5'-triphosphate + ADP. Its function is as follows. Major role in the synthesis of nucleoside triphosphates other than ATP. The ATP gamma phosphate is transferred to the NDP beta phosphate via a ping-pong mechanism, using a phosphorylated active-site intermediate. This chain is Nucleoside diphosphate kinase 6 (nme6), found in Xenopus tropicalis (Western clawed frog).